Consider the following 317-residue polypeptide: Ribosomal protein L11 methyltransferase (317 aa).

S-adenosyl-L-methionine contacts are provided by T158, G179, D201, and N244.

Belongs to the methyltransferase superfamily. PrmA family.

Its subcellular location is the cytoplasm. It carries out the reaction L-lysyl-[protein] + 3 S-adenosyl-L-methionine = N(6),N(6),N(6)-trimethyl-L-lysyl-[protein] + 3 S-adenosyl-L-homocysteine + 3 H(+). Functionally, methylates ribosomal protein L11. The polypeptide is Ribosomal protein L11 methyltransferase (Streptococcus agalactiae serotype III (strain NEM316)).